A 436-amino-acid chain; its full sequence is Trigger factor (436 aa).

The region spanning 163 to 248 is the PPIase FKBP-type domain; that stretch reads GDRVTVDFEG…VKKIEAAHLP (86 aa).

It belongs to the FKBP-type PPIase family. Tig subfamily.

Its subcellular location is the cytoplasm. It catalyses the reaction [protein]-peptidylproline (omega=180) = [protein]-peptidylproline (omega=0). In terms of biological role, involved in protein export. Acts as a chaperone by maintaining the newly synthesized protein in an open conformation. Functions as a peptidyl-prolyl cis-trans isomerase. This Paracidovorax citrulli (strain AAC00-1) (Acidovorax citrulli) protein is Trigger factor.